The following is a 329-amino-acid chain: Indolepyruvate C-methyltransferase (329 aa).

This sequence belongs to the methyltransferase superfamily.

It carries out the reaction indole-3-pyruvate + S-adenosyl-L-methionine = (R)-3-(indol-3-yl)-2-oxobutanoate + S-adenosyl-L-homocysteine + H(+). With respect to regulation, strongly inhibited by the thiol reagents p-chloromercuribenzoate and N-ethylmaleimide. Partially inhibited by o-phenanthroline and 2,2'-dipyridyl. Competitively inhibited by L-tryptophan and indolmycin. Its function is as follows. Involved in the biosynthesis of the antibiotic indolmycin, an inhibitor of the bacterial tryptophan-tRNA synthetases. Catalyzes the transfer of a methyl group from S-adenosyl-L-methionine to position 3 of the aliphatic side chain of (indol-3-yl)pyruvate to yield 3-methylindolepyruvate. This is Indolepyruvate C-methyltransferase from Streptomyces griseus.